The sequence spans 235 residues: 2-C-methyl-D-erythritol 4-phosphate cytidylyltransferase (235 aa).

This sequence belongs to the IspD/TarI cytidylyltransferase family. IspD subfamily.

The catalysed reaction is 2-C-methyl-D-erythritol 4-phosphate + CTP + H(+) = 4-CDP-2-C-methyl-D-erythritol + diphosphate. The protein operates within isoprenoid biosynthesis; isopentenyl diphosphate biosynthesis via DXP pathway; isopentenyl diphosphate from 1-deoxy-D-xylulose 5-phosphate: step 2/6. Functionally, catalyzes the formation of 4-diphosphocytidyl-2-C-methyl-D-erythritol from CTP and 2-C-methyl-D-erythritol 4-phosphate (MEP). This chain is 2-C-methyl-D-erythritol 4-phosphate cytidylyltransferase, found in Pseudomonas putida (strain ATCC 47054 / DSM 6125 / CFBP 8728 / NCIMB 11950 / KT2440).